Here is a 196-residue protein sequence, read N- to C-terminus: Recombination protein RecR (196 aa).

The segment at 57–72 (CERCNTFTEAPVCSTC) adopts a C4-type zinc-finger fold. The 96-residue stretch at 80–175 (RQLCVVETPA…SVTRLARGVP (96 aa)) folds into the Toprim domain.

It belongs to the RecR family.

Its function is as follows. May play a role in DNA repair. It seems to be involved in an RecBC-independent recombinational process of DNA repair. It may act with RecF and RecO. This Methylibium petroleiphilum (strain ATCC BAA-1232 / LMG 22953 / PM1) protein is Recombination protein RecR.